The sequence spans 251 residues: Glutamate 5-kinase (251 aa).

Lys7 serves as a coordination point for ATP. Residues Ser45, Asp130, and Asn142 each coordinate substrate. Residues 162-163 and 204-210 contribute to the ATP site; these read SD and TGGIVTK.

It belongs to the glutamate 5-kinase family.

The protein resides in the cytoplasm. It catalyses the reaction L-glutamate + ATP = L-glutamyl 5-phosphate + ADP. It participates in amino-acid biosynthesis; L-proline biosynthesis; L-glutamate 5-semialdehyde from L-glutamate: step 1/2. Functionally, catalyzes the transfer of a phosphate group to glutamate to form L-glutamate 5-phosphate. In Campylobacter jejuni subsp. jejuni serotype O:6 (strain 81116 / NCTC 11828), this protein is Glutamate 5-kinase.